Consider the following 844-residue polypeptide: SWI/SNF-related matrix-associated actin-dependent regulator of chromatin subfamily A containing DEAD/H box 1 homolog (844 aa).

A compositionally biased stretch (low complexity) spans 1–23; that stretch reads MSDSTVAASASASASSSAKSSLS. Disordered regions lie at residues 1 to 75 and 121 to 180; these read MSDS…TKLE and NCKP…STKM. Over residues 30–42 the composition is skewed to polar residues; sequence INKNASSVVASPS. The region spanning 301 to 471 is the Helicase ATP-binding domain; the sequence is TVMHKQEMNG…ISLLCFVMPK (171 aa). 314-321 lines the ATP pocket; that stretch reads DEMGLGKT. Positions 422–425 match the DEGH box motif; that stretch reads DEAH. Residues 656–818 form the Helicase C-terminal domain; it reads YLDTLLPKLK…EQRCVVKLLT (163 aa). 3 positions are modified to phosphoserine: Ser-834, Ser-838, and Ser-841.

It belongs to the SNF2/RAD54 helicase family.

The protein localises to the nucleus. The catalysed reaction is ATP + H2O = ADP + phosphate + H(+). Functionally, DNA helicase that possesses intrinsic ATP-dependent nucleosome-remodeling activity and is both required for DNA repair and heterochromatin organization. Promotes DNA end resection of double-strand breaks (DSBs) following DNA damage: probably acts by weakening histone DNA interactions in nucleosomes flanking DSBs. The polypeptide is SWI/SNF-related matrix-associated actin-dependent regulator of chromatin subfamily A containing DEAD/H box 1 homolog (Etl1) (Drosophila melanogaster (Fruit fly)).